The chain runs to 39 residues: Bacteriocin E50-52 (39 aa).

It localises to the secreted. Bacteriocin active against the Gram-negative bacteria C.jejuni, Y.enterocolitica and Y.pseudotuberculosis, and the Gram-positive bacteria S.aureus, S.epidermidis, L.monocytogenes and Listeria spp. When added to the drinking water of chickens, causes a decrease in the levels of C.jejuni and S.enteritidis in the ceca, and in the levels of S.enteritidis in the liver and spleen. This Enterococcus faecium (Streptococcus faecium) protein is Bacteriocin E50-52.